Here is a 324-residue protein sequence, read N- to C-terminus: dITP/XTP pyrophosphatase (324 aa).

Residues 1 to 126 (MTKSIFEYKD…SDNKSDFGDV (126 aa)) are unknown. Positions 127–324 (LLIATRNEGK…EVFPAWQNKQ (198 aa)) are NTP pyrophosphatase. 131 to 136 (TRNEGK) provides a ligand contact to substrate. Catalysis depends on Asp-193, which acts as the Proton acceptor. Asp-193 lines the Mg(2+) pocket. Substrate contacts are provided by residues Ser-194, 277 to 280 (FGYD), Lys-300, and 305 to 306 (HR).

The protein belongs to the HAM1 NTPase family. Homodimer. Requires Mg(2+) as cofactor.

The enzyme catalyses XTP + H2O = XMP + diphosphate + H(+). It catalyses the reaction dITP + H2O = dIMP + diphosphate + H(+). It carries out the reaction ITP + H2O = IMP + diphosphate + H(+). Pyrophosphatase that catalyzes the hydrolysis of nucleoside triphosphates to their monophosphate derivatives, with a high preference for the non-canonical purine nucleotides XTP (xanthosine triphosphate), dITP (deoxyinosine triphosphate) and ITP. Seems to function as a house-cleaning enzyme that removes non-canonical purine nucleotides from the nucleotide pool, thus preventing their incorporation into DNA/RNA and avoiding chromosomal lesions. The chain is dITP/XTP pyrophosphatase from Streptococcus thermophilus (strain ATCC BAA-250 / LMG 18311).